The sequence spans 318 residues: Formimidoylglutamase (318 aa).

Mn(2+) contacts are provided by His124, Asp153, His155, Asp157, Cys241, and Asp243.

Belongs to the arginase family. Mn(2+) serves as cofactor.

It catalyses the reaction N-formimidoyl-L-glutamate + H2O = formamide + L-glutamate. It functions in the pathway amino-acid degradation; L-histidine degradation into L-glutamate; L-glutamate from N-formimidoyl-L-glutamate (hydrolase route): step 1/1. Catalyzes the conversion of N-formimidoyl-L-glutamate to L-glutamate and formamide. The chain is Formimidoylglutamase from Fusobacterium nucleatum subsp. nucleatum (strain ATCC 25586 / DSM 15643 / BCRC 10681 / CIP 101130 / JCM 8532 / KCTC 2640 / LMG 13131 / VPI 4355).